Consider the following 249-residue polypeptide: 6-phosphogluconolactonase 3 (249 aa).

It belongs to the glucosamine/galactosamine-6-phosphate isomerase family. 6-phosphogluconolactonase subfamily.

It localises to the cytoplasm. The protein resides in the nucleus. The catalysed reaction is 6-phospho-D-glucono-1,5-lactone + H2O = 6-phospho-D-gluconate + H(+). The protein operates within carbohydrate degradation; pentose phosphate pathway; D-ribulose 5-phosphate from D-glucose 6-phosphate (oxidative stage): step 2/3. Its function is as follows. Hydrolysis of 6-phosphogluconolactone to 6-phosphogluconate. The sequence is that of 6-phosphogluconolactonase 3 (SOL3) from Saccharomyces cerevisiae (strain RM11-1a) (Baker's yeast).